The primary structure comprises 450 residues: tRNA modification GTPase MnmE (450 aa).

(6S)-5-formyl-5,6,7,8-tetrahydrofolate contacts are provided by arginine 26, glutamate 84, and lysine 123. One can recognise a TrmE-type G domain in the interval 219–376 (GMHVVLVGQP…LKAKLLEMIG (158 aa)). A K(+)-binding site is contributed by asparagine 229. GTP-binding positions include 229–234 (NVGKSS), 248–254 (TDIAGTT), 273–276 (DTAG), and 357–359 (SAR). Residue serine 233 participates in Mg(2+) binding. Positions 248, 250, and 253 each coordinate K(+). Threonine 254 lines the Mg(2+) pocket. Position 450 (lysine 450) interacts with (6S)-5-formyl-5,6,7,8-tetrahydrofolate.

Belongs to the TRAFAC class TrmE-Era-EngA-EngB-Septin-like GTPase superfamily. TrmE GTPase family. Homodimer. Heterotetramer of two MnmE and two MnmG subunits. K(+) serves as cofactor.

The protein localises to the cytoplasm. Functionally, exhibits a very high intrinsic GTPase hydrolysis rate. Involved in the addition of a carboxymethylaminomethyl (cmnm) group at the wobble position (U34) of certain tRNAs, forming tRNA-cmnm(5)s(2)U34. This Chromobacterium violaceum (strain ATCC 12472 / DSM 30191 / JCM 1249 / CCUG 213 / NBRC 12614 / NCIMB 9131 / NCTC 9757 / MK) protein is tRNA modification GTPase MnmE.